The sequence spans 375 residues: Succinyl-diaminopimelate desuccinylase (375 aa).

Histidine 66 is a Zn(2+) binding site. Aspartate 68 is an active-site residue. Aspartate 99 contributes to the Zn(2+) binding site. Glutamate 133 functions as the Proton acceptor in the catalytic mechanism. Residues glutamate 134, glutamate 162, and histidine 348 each contribute to the Zn(2+) site.

This sequence belongs to the peptidase M20A family. DapE subfamily. As to quaternary structure, homodimer. It depends on Zn(2+) as a cofactor. Co(2+) is required as a cofactor.

The enzyme catalyses N-succinyl-(2S,6S)-2,6-diaminopimelate + H2O = (2S,6S)-2,6-diaminopimelate + succinate. Its pathway is amino-acid biosynthesis; L-lysine biosynthesis via DAP pathway; LL-2,6-diaminopimelate from (S)-tetrahydrodipicolinate (succinylase route): step 3/3. Its function is as follows. Catalyzes the hydrolysis of N-succinyl-L,L-diaminopimelic acid (SDAP), forming succinate and LL-2,6-diaminopimelate (DAP), an intermediate involved in the bacterial biosynthesis of lysine and meso-diaminopimelic acid, an essential component of bacterial cell walls. The protein is Succinyl-diaminopimelate desuccinylase of Klebsiella pneumoniae subsp. pneumoniae (strain ATCC 700721 / MGH 78578).